Consider the following 907-residue polypeptide: Protein translocase subunit SecA (907 aa).

ATP-binding positions include glutamine 87, 105-109 (GEGKT), and aspartate 510. 4 residues coordinate Zn(2+): cysteine 892, cysteine 894, cysteine 903, and histidine 904.

The protein belongs to the SecA family. In terms of assembly, monomer and homodimer. Part of the essential Sec protein translocation apparatus which comprises SecA, SecYEG and auxiliary proteins SecDF-YajC and YidC. Requires Zn(2+) as cofactor.

The protein localises to the cell inner membrane. It is found in the cytoplasm. It carries out the reaction ATP + H2O + cellular proteinSide 1 = ADP + phosphate + cellular proteinSide 2.. In terms of biological role, part of the Sec protein translocase complex. Interacts with the SecYEG preprotein conducting channel. Has a central role in coupling the hydrolysis of ATP to the transfer of proteins into and across the cell membrane, serving both as a receptor for the preprotein-SecB complex and as an ATP-driven molecular motor driving the stepwise translocation of polypeptide chains across the membrane. The sequence is that of Protein translocase subunit SecA from Acinetobacter baumannii (strain ATCC 17978 / DSM 105126 / CIP 53.77 / LMG 1025 / NCDC KC755 / 5377).